We begin with the raw amino-acid sequence, 257 residues long: Pyridoxine 5'-phosphate synthase (257 aa).

Asn6 serves as a coordination point for 3-amino-2-oxopropyl phosphate. 8–9 provides a ligand contact to 1-deoxy-D-xylulose 5-phosphate; the sequence is DH. Position 17 (Arg17) interacts with 3-amino-2-oxopropyl phosphate. The active-site Proton acceptor is His41. Positions 43 and 48 each coordinate 1-deoxy-D-xylulose 5-phosphate. Glu68 (proton acceptor) is an active-site residue. Residue Thr98 participates in 1-deoxy-D-xylulose 5-phosphate binding. The Proton donor role is filled by His210. Residues Gly211 and 232–233 contribute to the 3-amino-2-oxopropyl phosphate site; that span reads GQ.

It belongs to the PNP synthase family. Homooctamer; tetramer of dimers.

Its subcellular location is the cytoplasm. It catalyses the reaction 3-amino-2-oxopropyl phosphate + 1-deoxy-D-xylulose 5-phosphate = pyridoxine 5'-phosphate + phosphate + 2 H2O + H(+). The protein operates within cofactor biosynthesis; pyridoxine 5'-phosphate biosynthesis; pyridoxine 5'-phosphate from D-erythrose 4-phosphate: step 5/5. Catalyzes the complicated ring closure reaction between the two acyclic compounds 1-deoxy-D-xylulose-5-phosphate (DXP) and 3-amino-2-oxopropyl phosphate (1-amino-acetone-3-phosphate or AAP) to form pyridoxine 5'-phosphate (PNP) and inorganic phosphate. The chain is Pyridoxine 5'-phosphate synthase from Campylobacter jejuni subsp. jejuni serotype O:2 (strain ATCC 700819 / NCTC 11168).